A 325-amino-acid chain; its full sequence is Tetraacyldisaccharide 4'-kinase (325 aa).

Residue Thr55–Thr62 coordinates ATP.

The protein belongs to the LpxK family.

It carries out the reaction a lipid A disaccharide + ATP = a lipid IVA + ADP + H(+). Its pathway is glycolipid biosynthesis; lipid IV(A) biosynthesis; lipid IV(A) from (3R)-3-hydroxytetradecanoyl-[acyl-carrier-protein] and UDP-N-acetyl-alpha-D-glucosamine: step 6/6. Its function is as follows. Transfers the gamma-phosphate of ATP to the 4'-position of a tetraacyldisaccharide 1-phosphate intermediate (termed DS-1-P) to form tetraacyldisaccharide 1,4'-bis-phosphate (lipid IVA). The chain is Tetraacyldisaccharide 4'-kinase from Salmonella arizonae (strain ATCC BAA-731 / CDC346-86 / RSK2980).